The chain runs to 191 residues: Apoptosis regulator BHRF1 (191 aa).

Residues Met1–Arg18 form an interaction with host VRK2 region. A glycan (N-linked (GlcNAc...) asparagine; by host) is linked at Asn22. A BH1 motif is present at residues Glu89 to Met109. An interaction with host VRK2 region spans residues Glu89–Gly142. Asn118 carries an N-linked (GlcNAc...) asparagine; by host glycan. The BH2 motif lies at Gly142–Asn157. A helical membrane pass occupies residues Trp166 to Ile186.

Belongs to the Bcl-2 family. Interacts with isoform 1 of host VRK2; this interaction is involved in protecting cells from apoptosis. Interacts with host PRA1; this interaction seems to modulate BHRF1 anti-apoptotic activity. Interacts with host BCL2L11. Interacts with host BAD and BBC3. Interacts with BALF1; BALF1 acting as a negative regulator of the survival function of BHRF1. Interacts with host BECN1.

It localises to the host membrane. Its subcellular location is the host mitochondrion. In terms of biological role, prevents premature death of the host cell during virus production, which would otherwise reduce the amount of progeny virus. Acts as a host B-cell leukemia/lymphoma 2 (Bcl-2) homolog, and interacts with pro-apoptotic proteins to prevent mitochondria permeabilization, release of cytochrome c and subsequent apoptosis of the host cell. In addition, plays a role in the inhibiton of host BECN1-mediated starvation-induced autophagy without affecting basal levels of autophagy. This chain is Apoptosis regulator BHRF1, found in Epstein-Barr virus (strain GD1) (HHV-4).